A 65-amino-acid polypeptide reads, in one-letter code: UPF0337 protein PA4738 (65 aa).

It belongs to the UPF0337 (CsbD) family.

The chain is UPF0337 protein PA4738 from Pseudomonas aeruginosa (strain ATCC 15692 / DSM 22644 / CIP 104116 / JCM 14847 / LMG 12228 / 1C / PRS 101 / PAO1).